Reading from the N-terminus, the 59-residue chain is Conotoxin ViVA (59 aa).

An N-terminal signal peptide occupies residues 1–19; it reads MRCVPVFIILLLLIPSASS. Positions 20-46 are excised as a propeptide; that stretch reads AAVQPKTEKDDVPLASVHDSALRILSR. Pyrrolidone carboxylic acid is present on glutamine 47. 2 cysteine pairs are disulfide-bonded: cysteine 48/cysteine 55 and cysteine 49/cysteine 56. At isoleucine 58 the chain carries Isoleucine amide.

It belongs to the conotoxin T superfamily. In terms of tissue distribution, expressed by the venom duct.

It is found in the secreted. This Conus virgo (Virgin cone) protein is Conotoxin ViVA.